The chain runs to 86 residues: Small ribosomal subunit protein bS20 (86 aa).

The segment covering 1–27 (MANIKSAKKRAVQSEKRRQHNASRRSM) has biased composition (basic residues). The interval 1–28 (MANIKSAKKRAVQSEKRRQHNASRRSMM) is disordered.

It belongs to the bacterial ribosomal protein bS20 family.

In terms of biological role, binds directly to 16S ribosomal RNA. This is Small ribosomal subunit protein bS20 from Proteus mirabilis (strain HI4320).